The chain runs to 105 residues: Pyrimidine/purine nucleoside phosphorylase (105 aa).

It belongs to the nucleoside phosphorylase PpnP family.

It carries out the reaction a purine D-ribonucleoside + phosphate = a purine nucleobase + alpha-D-ribose 1-phosphate. It catalyses the reaction adenosine + phosphate = alpha-D-ribose 1-phosphate + adenine. The catalysed reaction is cytidine + phosphate = cytosine + alpha-D-ribose 1-phosphate. The enzyme catalyses guanosine + phosphate = alpha-D-ribose 1-phosphate + guanine. It carries out the reaction inosine + phosphate = alpha-D-ribose 1-phosphate + hypoxanthine. It catalyses the reaction thymidine + phosphate = 2-deoxy-alpha-D-ribose 1-phosphate + thymine. The catalysed reaction is uridine + phosphate = alpha-D-ribose 1-phosphate + uracil. The enzyme catalyses xanthosine + phosphate = alpha-D-ribose 1-phosphate + xanthine. Its function is as follows. Catalyzes the phosphorolysis of diverse nucleosides, yielding D-ribose 1-phosphate and the respective free bases. Can use uridine, adenosine, guanosine, cytidine, thymidine, inosine and xanthosine as substrates. Also catalyzes the reverse reactions. In Paracidovorax citrulli (strain AAC00-1) (Acidovorax citrulli), this protein is Pyrimidine/purine nucleoside phosphorylase.